Consider the following 252-residue polypeptide: Triosephosphate isomerase (252 aa).

10–12 serves as a coordination point for substrate; it reads NWK. The active-site Electrophile is His96. The active-site Proton acceptor is the Glu168. Substrate contacts are provided by residues Gly174, Ser214, and 235–236; that span reads GG.

Belongs to the triosephosphate isomerase family. As to quaternary structure, homodimer.

Its subcellular location is the cytoplasm. It carries out the reaction D-glyceraldehyde 3-phosphate = dihydroxyacetone phosphate. It functions in the pathway carbohydrate biosynthesis; gluconeogenesis. The protein operates within carbohydrate degradation; glycolysis; D-glyceraldehyde 3-phosphate from glycerone phosphate: step 1/1. Functionally, involved in the gluconeogenesis. Catalyzes stereospecifically the conversion of dihydroxyacetone phosphate (DHAP) to D-glyceraldehyde-3-phosphate (G3P). This is Triosephosphate isomerase from Streptococcus pyogenes serotype M1.